A 118-amino-acid polypeptide reads, in one-letter code: Fluoride-specific ion channel FluC 2 (118 aa).

4 helical membrane-spanning segments follow: residues 1–21, 33–53, 55–75, and 93–113; these read MIEALLVATGGFFGAITRFAI, FPIATFLINITGAFLLGYIIG, GVTTGWQLLLGTGFMGAFTTF, and TFLLYLSATYIVGILFAFLGM. G70 and T73 together coordinate Na(+).

The protein belongs to the fluoride channel Fluc/FEX (TC 1.A.43) family.

The protein resides in the cell membrane. The enzyme catalyses fluoride(in) = fluoride(out). With respect to regulation, na(+) is not transported, but it plays an essential structural role and its presence is essential for fluoride channel function. In terms of biological role, fluoride-specific ion channel. Important for reducing fluoride concentration in the cell, thus reducing its toxicity. In Bacillus cereus (strain ZK / E33L), this protein is Fluoride-specific ion channel FluC 2.